The primary structure comprises 389 residues: Chalcone synthase (389 aa).

Residue cysteine 164 is part of the active site.

This sequence belongs to the thiolase-like superfamily. Chalcone/stilbene synthases family.

The enzyme catalyses (E)-4-coumaroyl-CoA + 3 malonyl-CoA + 3 H(+) = 2',4,4',6'-tetrahydroxychalcone + 3 CO2 + 4 CoA. It participates in secondary metabolite biosynthesis; flavonoid biosynthesis. The primary product of this enzyme is 4,2',4',6'-tetrahydroxychalcone (also termed naringenin-chalcone or chalcone) which can under specific conditions spontaneously isomerize into naringenin. The chain is Chalcone synthase (CHS) from Hydrangea macrophylla (Bigleaf hydrangea).